We begin with the raw amino-acid sequence, 369 residues long: MFAPLQNDTFLRACLRQATDHTPVWLMRQAGRYLPEYKATRAKAGSFMGLATNTDYATEVTLQPLERYPLDAAILFSDILTVPDAMGLGLSFALGEGPRFATPVRDEAAVNKLEVPDMNKLRYVFDAVTSIRKALGGRVPLIGFSGSPWTLACYMVEGSGSDDYRLVKTMLYQRPDLMHKMLAINADAVALYLNAQIEAGAQAVMIFDSWGGVLADAAFHTFSLAYTARVLSQLKREHKGVTIPRLVFTKGGGQWLESMKQLDCEVLGLDWTVNLAKARALVGENGPNAKALQGNLDPNVLFANPAQIEAEVAAVLNSFGAPHTDLTQTGPTQIFNLGHGISQHTPPESVEVLVRAVHAHSRSLRKQQG.

Residues R28–R32, D78, Y154, S209, and H339 each bind substrate.

The protein belongs to the uroporphyrinogen decarboxylase family. As to quaternary structure, homodimer.

It localises to the cytoplasm. It catalyses the reaction uroporphyrinogen III + 4 H(+) = coproporphyrinogen III + 4 CO2. Its pathway is porphyrin-containing compound metabolism; protoporphyrin-IX biosynthesis; coproporphyrinogen-III from 5-aminolevulinate: step 4/4. Its function is as follows. Catalyzes the decarboxylation of four acetate groups of uroporphyrinogen-III to yield coproporphyrinogen-III. The chain is Uroporphyrinogen decarboxylase from Polaromonas naphthalenivorans (strain CJ2).